The sequence spans 313 residues: Bifunctional pinoresinol-lariciresinol reductase 1 (313 aa).

Residues 11-17 (GGTGYIG), R36, and K45 each bind NADP(+). K138 functions as the Proton acceptor in the catalytic mechanism. An NADP(+)-binding site is contributed by R142. Residue H271 coordinates substrate.

Belongs to the NmrA-type oxidoreductase family. Isoflavone reductase subfamily. In terms of assembly, dimer.

It carries out the reaction (+)-lariciresinol + NADP(+) = (+)-pinoresinol + NADPH + H(+). The enzyme catalyses (-)-lariciresinol + NADP(+) = (-)-pinoresinol + NADPH + H(+). The catalysed reaction is (+)-secoisolariciresinol + NADP(+) = (-)-lariciresinol + NADPH + H(+). In terms of biological role, reductase involved in lignan biosynthesis. Catalyzes the enantioselective sequential conversion of (-)-pinoresinol into (-)-lariciresinol and of (-)-lariciresinol into (+)-secoisolariciresinol. Can also convert with a lower efficiency (+)-pinoresinol into (+)-lariciresinol, but not (+)-lariciresinol into (-)-secoisolariciresinol. Abstracts the 4R-hydride from the NADPH cofactor during catalysis. The protein is Bifunctional pinoresinol-lariciresinol reductase 1 (PLR_Tp1) of Thuja plicata (Western red-cedar).